Consider the following 393-residue polypeptide: MDFGALPPEVNSVRMYAGPGSAPMVAAASAWNGLAAELSSAATGYETVITQLSSEGWLGPASAAMAEAVAPYVAWMSAAAAQAEQAATQARAAAAAFEAAFAATVPPPLIAANRASLMQLISTNVFGQNTSAIAAAEAQYGEMWAQDSAAMYAYAGSSASASAVTPFSTPPQIANPTAQGTQAAAVATAAGTAQSTLTEMITGLPNALQSLTSPLLQSSNGPLSWLWQILFGTPNFPTSISALLTDLQPYASFFYNTEGLPYFSIGMGNNFIQSAKTLGLIGSAAPAAVAAAGDAAKGLPGLGGMLGGGPVAAGLGNAASVGKLSVPPVWSGPLPGSVTPGAAPLPVSTVSAAPEAAPGSLLGGLPLAGAGGAGAGPRYGFRPTVMARPPFAG.

The protein belongs to the mycobacterial PPE family. As to quaternary structure, interacts with human TLR2.

Functionally, probably plays a key role in regulating innate and adaptive immune responses through human Toll-like receptor 2 (TLR2). Interacts with TLR2, leading to the subsequent activation of the mitogen-activated protein kinase (MAPK) and nuclear factor kappa B (NF-kappa-B) signaling pathways. Stimulates macrophage activation by augmenting pro-inflammatory cytokine production (TNF-alpha, IL-6 and IL-12p40) and the expression of cell surface molecules (CD80, CD86, MHC class I and II). Also participates in adaptive immunity by directing Th1-polarised immune responses. This chain is PPE family protein PPE26, found in Mycobacterium tuberculosis (strain ATCC 25618 / H37Rv).